We begin with the raw amino-acid sequence, 137 residues long: MAVSKKLFVELVTPERELWAGEGDMVIAKTVEGEIGIQPGHVPVLALLAPGSVVRVLGARESGEVRAAVHGGFMSVTLSDRVSILAEIAELAEEIDVERARAALKSAEREALGDAEMRARVARARGRLRAAKAEEAA.

The protein belongs to the ATPase epsilon chain family. As to quaternary structure, F-type ATPases have 2 components, CF(1) - the catalytic core - and CF(0) - the membrane proton channel. CF(1) has five subunits: alpha(3), beta(3), gamma(1), delta(1), epsilon(1). CF(0) has three main subunits: a, b and c.

The protein resides in the cell membrane. In terms of biological role, produces ATP from ADP in the presence of a proton gradient across the membrane. The polypeptide is ATP synthase epsilon chain (Thermobifida fusca (strain YX)).